A 462-amino-acid chain; its full sequence is Cytochrome b558/566 subunit A (462 aa).

Residues 1–8 (MSLKIKSK) are Cytoplasmic-facing. A helical membrane pass occupies residues 9-26 (ITIGVLLIIFLLSIIFTL). Topologically, residues 27–431 (ENVSLAQTSP…TSTSPVTTIS (405 aa)) are extracellular. Asn-28, Asn-65, Asn-91, Asn-121, Asn-144, Asn-164, Asn-174, Asn-183, Asn-211, Asn-278, Asn-279, Asn-293, Asn-316, Asn-339, Asn-353, and Asn-376 each carry an N-linked (GlcNAc...) asparagine glycan. The helical transmembrane segment at 432–456 (SAIPPVTLYVTIIGVVVALVALVIL) threads the bilayer. Topologically, residues 457–462 (YVVFRR) are cytoplasmic.

Heme is required as a cofactor. In terms of processing, N-glycosylated on at least seven Asn residues by identical hexasaccharide units composed of Man, GlcNAc, Glc and 6-deoxy-6-sulfoglucose residues in the molar ration of 2:2:1:1. Post-translationally, O-glycosylated on probably as many as 35 positions by single Man residues.

It is found in the cell membrane. In terms of biological role, monoheme cytochrome whose physiological function is not yet clear. The chain is Cytochrome b558/566 subunit A (cbsA) from Sulfolobus acidocaldarius (strain ATCC 33909 / DSM 639 / JCM 8929 / NBRC 15157 / NCIMB 11770).